The primary structure comprises 361 residues: Spermatogenesis-associated protein 17 (361 aa).

IQ domains follow at residues 32-61 (ENDA…IVTI), 55-84 (LNRI…VAYY), and 91-120 (YNAM…LKEY).

It is found in the cytoplasm. The protein is Spermatogenesis-associated protein 17 (SPATA17) of Macaca fascicularis (Crab-eating macaque).